The sequence spans 83 residues: Non-muscle caldesmon (83 aa).

2 stretches are compositionally biased toward basic and acidic residues: residues 1 to 44 and 62 to 76; these read QTSE…KEEK and NQLK…KESK. Positions 1–63 are myosin and calmodulin-binding; sequence QTSEKEGRSE…PKPGSIEENQ (63 aa). A disordered region spans residues 1 to 83; that stretch reads QTSEKEGRSE…ESKNILSLCL (83 aa).

In non-muscle cells, phosphorylation by CDC2 during mitosis causes caldesmon to dissociate from microfilaments. Phosphorylation reduces caldesmon binding to actin, myosin, and calmodulin as well as its inhibition of actomyosin ATPase activity. Phosphorylation also occurs in both quiescent and dividing smooth muscle cells with similar effects on the interaction with actin and calmodulin and on microfilaments reorganization.

It localises to the cytoplasm. It is found in the cytoskeleton. The protein resides in the myofibril. The protein localises to the stress fiber. Functionally, actin- and myosin-binding protein implicated in the regulation of actomyosin interactions in smooth muscle and nonmuscle cells (could act as a bridge between myosin and actin filaments). Stimulates actin binding of tropomyosin which increases the stabilization of actin filament structure. In muscle tissues, inhibits the actomyosin ATPase by binding to F-actin. This inhibition is attenuated by calcium-calmodulin and is potentiated by tropomyosin. Interacts with actin, myosin, two molecules of tropomyosin and with calmodulin. Also plays an essential role during cellular mitosis and receptor capping. This Bos taurus (Bovine) protein is Non-muscle caldesmon (CALD1).